A 138-amino-acid polypeptide reads, in one-letter code: uncharacterized protein (138 aa).

Residues 1–35 form the signal peptide; sequence MVAPAARVFLRAVRAALTSTVPDLLCLLARGSPRG.

Isoform 1 is highly expressed in small intestine, testis and kidney, medium expressed in brain and heart and low expressed in colon; it could not be detected in liver, adrenal gland and pancreas.

The protein resides in the secreted. This is an uncharacterized protein from Homo sapiens (Human).